A 207-amino-acid polypeptide reads, in one-letter code: Phenazine biosynthesis protein PhzD (207 aa).

The active-site Proton donor is Asp38. Substrate contacts are provided by residues Gln78, Arg87, Lys122, and 151-155 (YAHVG).

This sequence belongs to the isochorismatase family. Homodimer.

It carries out the reaction (2S)-2-amino-4-deoxychorismate + H2O = (5S,6S)-6-amino-5-hydroxycyclohexa-1,3-diene-1-carboxyate + pyruvate. The protein operates within antibiotic biosynthesis; phenazine biosynthesis. Its function is as follows. Involved in the biosynthesis of the antibiotic phenazine, a nitrogen-containing heterocyclic molecule having important roles in virulence, competition and biological control. Catalyzes the hydrolysis of the vinyl ether functional group of 2-amino-2-deoxyisochorismate (ADIC), yielding pyruvate and trans-2,3-dihydro-3-hydroxyanthranilic acid (DHHA). In Pseudomonas fluorescens, this protein is Phenazine biosynthesis protein PhzD.